The chain runs to 474 residues: Aspartic-type endopeptidase ctsD (474 aa).

The N-terminal stretch at 1–19 is a signal peptide; it reads MHLLQCLLSTISLASTVTA. The region spanning 106–413 is the Peptidase A1 domain; it reads YFATVRVGSQ…DYDNHRIGFA (308 aa). The active site involves Asp-124. Residues Asn-189, Asn-197, Asn-275, and Asn-301 are each glycosylated (N-linked (GlcNAc...) asparagine). The active site involves Asp-307. N-linked (GlcNAc...) asparagine glycans are attached at residues Asn-338, Asn-344, and Asn-414. Ser-452 is lipidated: GPI-anchor amidated serine. Residues 453–474 constitute a propeptide, removed in mature form; it reads ASIVSRFVHWPFIFALLCMVLV.

This sequence belongs to the peptidase A1 family.

The protein resides in the cell membrane. Its function is as follows. Secreted aspartic-type endopeptidase which is secreted and contributes to virulence. The sequence is that of Aspartic-type endopeptidase ctsD (ctsD) from Aspergillus fumigatus (strain ATCC MYA-4609 / CBS 101355 / FGSC A1100 / Af293) (Neosartorya fumigata).